The sequence spans 119 residues: Large ribosomal subunit protein bL20 (119 aa).

The protein belongs to the bacterial ribosomal protein bL20 family.

Functionally, binds directly to 23S ribosomal RNA and is necessary for the in vitro assembly process of the 50S ribosomal subunit. It is not involved in the protein synthesizing functions of that subunit. This chain is Large ribosomal subunit protein bL20, found in Nitrosospira multiformis (strain ATCC 25196 / NCIMB 11849 / C 71).